The chain runs to 379 residues: Tryptophan 2,3-dioxygenase (379 aa).

Substrate is bound by residues 57–61 (FIITH) and arginine 128. Histidine 312 lines the heme pocket. Threonine 327 is a substrate binding site.

Belongs to the tryptophan 2,3-dioxygenase family. Homotetramer. Dimer of dimers. It depends on heme as a cofactor.

It carries out the reaction L-tryptophan + O2 = N-formyl-L-kynurenine. It participates in amino-acid degradation; L-tryptophan degradation via kynurenine pathway; L-kynurenine from L-tryptophan: step 1/2. The protein operates within pigment biosynthesis; ommochrome biosynthesis. Its function is as follows. Heme-dependent dioxygenase that catalyzes the oxidative cleavage of the L-tryptophan (L-Trp) pyrrole ring and converts L-tryptophan to N-formyl-L-kynurenine. Catalyzes the oxidative cleavage of the indole moiety. The sequence is that of Tryptophan 2,3-dioxygenase from Drosophila sechellia (Fruit fly).